We begin with the raw amino-acid sequence, 552 residues long: Mothers against decapentaplegic homolog 4 (552 aa).

Residues 1–322 are mediates interaction with ZBTB7A; sequence MDNMSITNTP…PISNHPAPEY (322 aa). The region spanning 18 to 142 is the MH1 domain; it reads SIVHSLMCHR…YERVVSPGID (125 aa). N6-acetyllysine is present on lysine 37. The required for interaction with TSC22D1 stretch occupies residues 44 to 69; that stretch reads VKKLKEKKDELDSLITAITTNGAHPS. Zn(2+) is bound at residue cysteine 71. Lysine 113 is covalently cross-linked (Glycyl lysine isopeptide (Lys-Gly) (interchain with G-Cter in SUMO2)). The Zn(2+) site is built by cysteine 115, cysteine 127, and histidine 132. The tract at residues 264 to 297 is disordered; sequence STTTWTGSRTAPYPPNLPHHQNGHLQHHPPMPPH. Residues 275 to 320 form an SAD region; that stretch reads PYPPNLPHHQNGHLQHHPPMPPHPGHYWPVHNELAFQPPISNHPAP. An MH2 domain is found at 323 to 552; the sequence is WCSIAYFEMD…MPIADPQPLD (230 aa). N6-acetyllysine is present on residues lysine 428 and lysine 507. Lysine 519 is covalently cross-linked (Glycyl lysine isopeptide (Lys-Gly) (interchain with G-Cter in ubiquitin)).

It belongs to the dwarfin/SMAD family. Monomer; in the absence of TGF-beta activation. Heterotrimer; on TGF-beta activation. Heterotrimer composed of two molecules of a C-terminally phosphorylated R-SMAD molecule, SMAD2 or SMAD3, and one molecule of SMAD4 to form the transcriptional active SMAD2/SMAD3-SMAD4 complex. Found in a ternary complex composed of SMAD4, STK11/LKB1 and STK11IP. Found in a complex with SMAD1 and YY1. Identified in a complex that contains at least ZNF451, SMAD2, SMAD3 and SMAD4. Interacts with ATF2, COPS5, DACH1, MSG1, SKI, STK11/LKB1, STK11IP and TRIM33. Associates with ZNF423 or ZNF521 in response to BMP2 leading to activate transcription of BMP target genes. Interacts with USP9X. Interacts with RBPMS. Interacts with WWTR1 (via coiled-coil domain). Interacts with CITED1 and CITED2. Interacts with PDPK1 (via PH domain). Interacts with VPS39; this interaction affects heterodimer formation with SMAD3, but not with SMAD2, and leads to inhibition of SMAD3-dependent transcription activation. Interactions with VPS39 and SMAD2 may be mutually exclusive. Interacts (via MH2 domain) with ZNF451 (via N-terminal zinc-finger domains). Interacts with ZC3H3. Interacts weakly with ZNF8. Interacts with NUP93 and IPO7; translocates SMAD4 to the nucleus through the NPC upon BMP7 stimulation resulting in activation of SMAD4 signaling. Interacts with CREB3L1, the interaction takes place upon TGFB1 induction and SMAD4 acts as a CREB3L1 coactivator to induce the expression of genes involved in the assembly of collagen extracellular matrix. Interacts with DLX1. Interacts with ZBTB7A; the interaction is direct and stimulated by TGFB1. Interacts with CREBBP; the recruitment of this transcriptional coactivator is negatively regulated by ZBTB7A. Interacts with EP300; the interaction with this transcriptional coactivator is negatively regulated by ZBTB7A. Interacts with HDAC1. Interacts (via MH2 domain) with ZMIZ1 (via SP-RING-type domain); in the TGF-beta signaling pathway increases the activity of the SMAD3/SMAD4 transcriptional complex. Interacts (via N-terminus) with TSC22D1. In terms of processing, phosphorylated by PDPK1. Post-translationally, monoubiquitinated on Lys-519 by E3 ubiquitin-protein ligase TRIM33. Monoubiquitination hampers its ability to form a stable complex with activated SMAD2/3 resulting in inhibition of TGF-beta/BMP signaling cascade. Deubiquitination by USP9X restores its competence to mediate TGF-beta signaling.

The protein localises to the cytoplasm. The protein resides in the nucleus. Its function is as follows. Common SMAD (co-SMAD) is the coactivator and mediator of signal transduction by TGF-beta (transforming growth factor). Component of the heterotrimeric SMAD2/SMAD3-SMAD4 complex that forms in the nucleus and is required for the TGF-mediated signaling. Promotes binding of the SMAD2/SMAD4/FAST-1 complex to DNA and provides an activation function required for SMAD1 or SMAD2 to stimulate transcription. Component of the multimeric SMAD3/SMAD4/JUN/FOS complex which forms at the AP1 promoter site; required for synergistic transcriptional activity in response to TGF-beta. Acts synergistically with SMAD1 and YY1 in bone morphogenetic protein (BMP)-mediated cardiac-specific gene expression. Binds to SMAD binding elements (SBEs) (5'-GTCT/AGAC-3') within BMP response element (BMPRE) of cardiac activating regions. May act as a tumor suppressor. Positively regulates PDPK1 kinase activity by stimulating its dissociation from the 14-3-3 protein YWHAQ which acts as a negative regulator. In muscle physiology, plays a central role in the balance between atrophy and hypertrophy. When recruited by MSTN, promotes atrophy response via phosphorylated SMAD2/4. MSTN decrease causes SMAD4 release and subsequent recruitment by the BMP pathway to promote hypertrophy via phosphorylated SMAD1/5/8. In Sus scrofa (Pig), this protein is Mothers against decapentaplegic homolog 4 (SMAD4).